The primary structure comprises 89 residues: Small ribosomal subunit protein uS15 (89 aa).

It belongs to the universal ribosomal protein uS15 family. In terms of assembly, part of the 30S ribosomal subunit. Forms a bridge to the 50S subunit in the 70S ribosome, contacting the 23S rRNA.

One of the primary rRNA binding proteins, it binds directly to 16S rRNA where it helps nucleate assembly of the platform of the 30S subunit by binding and bridging several RNA helices of the 16S rRNA. In terms of biological role, forms an intersubunit bridge (bridge B4) with the 23S rRNA of the 50S subunit in the ribosome. The protein is Small ribosomal subunit protein uS15 of Polynucleobacter asymbioticus (strain DSM 18221 / CIP 109841 / QLW-P1DMWA-1) (Polynucleobacter necessarius subsp. asymbioticus).